Here is a 179-residue protein sequence, read N- to C-terminus: Natural killer cells antigen CD94 (179 aa).

Residues 1–10 (MAVFKTTLWR) are Cytoplasmic-facing. Residues 11-31 (LISGTLGIICLSLMATLGILL) traverse the membrane as a helical; Signal-anchor for type II membrane protein segment. At 32–179 (KNSFTKLSIE…NRYICKQQLI (148 aa)) the chain is on the extracellular side. Intrachain disulfides connect cysteine 58–cysteine 70 and cysteine 61–cysteine 72. One can recognise a C-type lectin domain in the interval 68–175 (YRCNCYFISS…CEDKNRYICK (108 aa)). Asparagine 83 and asparagine 132 each carry an N-linked (GlcNAc...) asparagine glycan. 2 cysteine pairs are disulfide-bonded: cysteine 89–cysteine 174 and cysteine 152–cysteine 166.

As to quaternary structure, can form disulfide-bonded heterodimer with NKG2 family members KLRC1 and KLRC2. KLRD1-KLRC1 heterodimer interacts with peptide-bound MHC-E-B2M heterotrimeric complex. KLRD1 plays a prominent role in directly interacting with MHC-E. KLRD1-KLRC1 interacts with much higher affinity with peptide-bound MHC-E-B2M than KLRD1-KLRC2. Interacts with the adapter protein TYROBP/DAP12; this interaction is required for cell surface expression and cell activation. Natural killer cells.

Its subcellular location is the cell membrane. Immune receptor involved in self-nonself discrimination. In complex with KLRC1 or KLRC2 on cytotoxic and regulatory lymphocyte subsets, recognizes non-classical major histocompatibility (MHC) class Ib molecule MHC-E loaded with self-peptides derived from the signal sequence of classical MHC class Ia and non-classical MHC class Ib molecules. Enables cytotoxic cells to monitor the expression of MHC class I molecules in healthy cells and to tolerate self. Primarily functions as a ligand binding subunit as it lacks the capacity to signal. Its function is as follows. KLRD1-KLRC1 acts as an immune inhibitory receptor. Key inhibitory receptor on natural killer (NK) cells that regulates their activation and effector functions. Dominantly counteracts T cell receptor signaling on a subset of memory/effector CD8-positive T cells as part of an antigen-driven response to avoid autoimmunity. On intraepithelial CD8-positive gamma-delta regulatory T cells triggers TGFB1 secretion, which in turn limits the cytotoxic programming of intraepithelial CD8-positive alpha-beta T cells, distinguishing harmless from pathogenic antigens. In MHC-E-rich tumor microenvironment, acts as an immune inhibitory checkpoint and may contribute to progressive loss of effector functions of NK cells and tumor-specific T cells, a state known as cell exhaustion. Upon MHC-E-peptide binding, transmits intracellular signals through KLRC1 immunoreceptor tyrosine-based inhibition motifs (ITIMs) by recruiting INPP5D/SHIP-1 and INPPL1/SHIP-2 tyrosine phosphatases to ITIMs, and ultimately opposing signals transmitted by activating receptors through dephosphorylation of proximal signaling molecules. Functionally, KLRD1-KLRC2 acts as an immune activating receptor. On cytotoxic lymphocyte subsets recognizes MHC-E loaded with signal sequence-derived peptides from non-classical MHC class Ib MHC-G molecules, likely playing a role in the generation and effector functions of adaptive NK cells and in maternal-fetal tolerance during pregnancy. Regulates the effector functions of terminally differentiated cytotoxic lymphocyte subsets, and in particular may play a role in adaptive NK cell response to viral infection. Upon MHC-E-peptide binding, transmits intracellular signals via the adapter protein TYROBP/DAP12, triggering the phosphorylation of proximal signaling molecules and cell activation. The protein is Natural killer cells antigen CD94 (KLRD1) of Pan troglodytes (Chimpanzee).